The chain runs to 359 residues: Nicotinate-nucleotide--dimethylbenzimidazole phosphoribosyltransferase (359 aa).

Catalysis depends on glutamate 318, which acts as the Proton acceptor.

This sequence belongs to the CobT family. As to quaternary structure, homodimer.

It catalyses the reaction 5,6-dimethylbenzimidazole + nicotinate beta-D-ribonucleotide = alpha-ribazole 5'-phosphate + nicotinate + H(+). Its pathway is nucleoside biosynthesis; alpha-ribazole biosynthesis; alpha-ribazole from 5,6-dimethylbenzimidazole: step 1/2. In terms of biological role, catalyzes the synthesis of alpha-ribazole-5'-phosphate from nicotinate mononucleotide (NAMN) and 5,6-dimethylbenzimidazole (DMB). The chain is Nicotinate-nucleotide--dimethylbenzimidazole phosphoribosyltransferase from Shigella sonnei (strain Ss046).